Reading from the N-terminus, the 173-residue chain is MAKVQGKNAAEKENDDGLREKMIAVNRVSKVVKGGRTMSFAALTVVGDGDGRIGMGKGKAREVPVSVQKAMEQARRGMFKVALKNGTLYHTVVGKHGASTVLISPAAEGTGVIAGGPMRAIFEVMGVRNVVAKSLGSSNPYNMVRATLNGLRNSLTPSEVAAKRGKSVEEILG.

In terms of domain architecture, S5 DRBM spans leucine 18–valine 81.

The protein belongs to the universal ribosomal protein uS5 family. As to quaternary structure, part of the 30S ribosomal subunit. Contacts proteins S4 and S8.

Its function is as follows. With S4 and S12 plays an important role in translational accuracy. Functionally, located at the back of the 30S subunit body where it stabilizes the conformation of the head with respect to the body. This chain is Small ribosomal subunit protein uS5, found in Bordetella avium (strain 197N).